A 120-amino-acid polypeptide reads, in one-letter code: MNDSSLSLKKWHALSALSNTMLSLAQSGKWDELIEQEVAYVSLVEKISITPFPPGSKHIQDQAMVMLNNVLQNEMTLKTLLQERMDELHGLMAQTGKQKNVNITYGRLSGNVLFPGEINQ.

Residues 1–50 form a required for homodimerization region; that stretch reads MNDSSLSLKKWHALSALSNTMLSLAQSGKWDELIEQEVAYVSLVEKISIT. A fliD binding region spans residues 59–97; it reads IQDQAMVMLNNVLQNEMTLKTLLQERMDELHGLMAQTGK.

The protein belongs to the FliT family. As to quaternary structure, homodimer. Interacts with FliD and FlhC.

Its subcellular location is the cytoplasm. The protein resides in the cytosol. In terms of biological role, dual-function protein that regulates the transcription of class 2 flagellar operons and that also acts as an export chaperone for the filament-capping protein FliD. As a transcriptional regulator, acts as an anti-FlhDC factor; it directly binds FlhC, thus inhibiting the binding of the FlhC/FlhD complex to class 2 promoters, resulting in decreased expression of class 2 flagellar operons. As a chaperone, effects FliD transition to the membrane by preventing its premature polymerization, and by directing it to the export apparatus. In Enterobacter sp. (strain 638), this protein is Flagellar protein FliT.